The chain runs to 448 residues: Glucose-6-phosphate isomerase (448 aa).

Residue glutamate 290 is the Proton donor of the active site. Catalysis depends on residues histidine 311 and lysine 425.

The protein belongs to the GPI family.

The protein resides in the cytoplasm. The catalysed reaction is alpha-D-glucose 6-phosphate = beta-D-fructose 6-phosphate. It functions in the pathway carbohydrate biosynthesis; gluconeogenesis. It participates in carbohydrate degradation; glycolysis; D-glyceraldehyde 3-phosphate and glycerone phosphate from D-glucose: step 2/4. In terms of biological role, catalyzes the reversible isomerization of glucose-6-phosphate to fructose-6-phosphate. The sequence is that of Glucose-6-phosphate isomerase from Lactococcus lactis subsp. lactis (strain IL1403) (Streptococcus lactis).